Here is a 115-residue protein sequence, read N- to C-terminus: Thionin-like protein 2 (115 aa).

The signal sequence occupies residues 1–20 (MLVAVMIVMVIGNLLAQTAA).

This sequence belongs to the plant thionin (TC 1.C.44) family. Post-translationally, is disulfide-linked.

It localises to the secreted. Functionally, may be involved in plant defense. This is Thionin-like protein 2 from Arabidopsis thaliana (Mouse-ear cress).